The primary structure comprises 144 residues: Deoxyuridine 5'-triphosphate nucleotidohydrolase (144 aa).

Substrate is bound by residues 63-65 (RSG), asparagine 76, and 80-82 (TID).

The protein belongs to the dUTPase family. It depends on Mg(2+) as a cofactor.

The catalysed reaction is dUTP + H2O = dUMP + diphosphate + H(+). It functions in the pathway pyrimidine metabolism; dUMP biosynthesis; dUMP from dCTP (dUTP route): step 2/2. Its function is as follows. This enzyme is involved in nucleotide metabolism: it produces dUMP, the immediate precursor of thymidine nucleotides and it decreases the intracellular concentration of dUTP so that uracil cannot be incorporated into DNA. This chain is Deoxyuridine 5'-triphosphate nucleotidohydrolase, found in Bacteroides thetaiotaomicron (strain ATCC 29148 / DSM 2079 / JCM 5827 / CCUG 10774 / NCTC 10582 / VPI-5482 / E50).